A 459-amino-acid chain; its full sequence is Exodeoxyribonuclease 7 large subunit (459 aa).

This sequence belongs to the XseA family. Heterooligomer composed of large and small subunits.

It localises to the cytoplasm. The enzyme catalyses Exonucleolytic cleavage in either 5'- to 3'- or 3'- to 5'-direction to yield nucleoside 5'-phosphates.. Its function is as follows. Bidirectionally degrades single-stranded DNA into large acid-insoluble oligonucleotides, which are then degraded further into small acid-soluble oligonucleotides. This Pseudomonas fluorescens (strain SBW25) protein is Exodeoxyribonuclease 7 large subunit.